We begin with the raw amino-acid sequence, 202 residues long: ATP-dependent Clp protease proteolytic subunit (202 aa).

Ser101 serves as the catalytic Nucleophile. His126 is an active-site residue.

This sequence belongs to the peptidase S14 family. In terms of assembly, component of the chloroplastic Clp protease core complex.

The protein localises to the plastid. It is found in the chloroplast stroma. It carries out the reaction Hydrolysis of proteins to small peptides in the presence of ATP and magnesium. alpha-casein is the usual test substrate. In the absence of ATP, only oligopeptides shorter than five residues are hydrolyzed (such as succinyl-Leu-Tyr-|-NHMec, and Leu-Tyr-Leu-|-Tyr-Trp, in which cleavage of the -Tyr-|-Leu- and -Tyr-|-Trp bonds also occurs).. Functionally, cleaves peptides in various proteins in a process that requires ATP hydrolysis. Has a chymotrypsin-like activity. Plays a major role in the degradation of misfolded proteins. The protein is ATP-dependent Clp protease proteolytic subunit of Calycanthus floridus var. glaucus (Eastern sweetshrub).